Here is a 493-residue protein sequence, read N- to C-terminus: Proline--tRNA ligase (493 aa).

The protein belongs to the class-II aminoacyl-tRNA synthetase family. ProS type 3 subfamily. In terms of assembly, homodimer.

The protein localises to the cytoplasm. It carries out the reaction tRNA(Pro) + L-proline + ATP = L-prolyl-tRNA(Pro) + AMP + diphosphate. Catalyzes the attachment of proline to tRNA(Pro) in a two-step reaction: proline is first activated by ATP to form Pro-AMP and then transferred to the acceptor end of tRNA(Pro). The sequence is that of Proline--tRNA ligase from Azobacteroides pseudotrichonymphae genomovar. CFP2.